Reading from the N-terminus, the 570-residue chain is Sulfite reductase [NADPH] hemoprotein beta-component (570 aa).

[4Fe-4S] cluster-binding residues include C434, C440, C479, and C483. C483 is a siroheme binding site.

This sequence belongs to the nitrite and sulfite reductase 4Fe-4S domain family. In terms of assembly, alpha(8)-beta(8). The alpha component is a flavoprotein, the beta component is a hemoprotein. The cofactor is siroheme. It depends on [4Fe-4S] cluster as a cofactor.

It catalyses the reaction hydrogen sulfide + 3 NADP(+) + 3 H2O = sulfite + 3 NADPH + 4 H(+). It functions in the pathway sulfur metabolism; hydrogen sulfide biosynthesis; hydrogen sulfide from sulfite (NADPH route): step 1/1. Functionally, component of the sulfite reductase complex that catalyzes the 6-electron reduction of sulfite to sulfide. This is one of several activities required for the biosynthesis of L-cysteine from sulfate. The protein is Sulfite reductase [NADPH] hemoprotein beta-component of Shigella boydii serotype 4 (strain Sb227).